The following is a 481-amino-acid chain: Argininosuccinate lyase (481 aa).

The protein belongs to the lyase 1 family. Argininosuccinate lyase subfamily.

The protein resides in the cytoplasm. It catalyses the reaction 2-(N(omega)-L-arginino)succinate = fumarate + L-arginine. It participates in amino-acid biosynthesis; L-arginine biosynthesis; L-arginine from L-ornithine and carbamoyl phosphate: step 3/3. The polypeptide is Argininosuccinate lyase (Methanococcus maripaludis (strain DSM 14266 / JCM 13030 / NBRC 101832 / S2 / LL)).